Reading from the N-terminus, the 328-residue chain is D-cysteine desulfhydrase (328 aa).

Position 51 is an N6-(pyridoxal phosphate)lysine (lysine 51).

This sequence belongs to the ACC deaminase/D-cysteine desulfhydrase family. As to quaternary structure, homodimer. Pyridoxal 5'-phosphate serves as cofactor.

The enzyme catalyses D-cysteine + H2O = hydrogen sulfide + pyruvate + NH4(+) + H(+). Functionally, catalyzes the alpha,beta-elimination reaction of D-cysteine and of several D-cysteine derivatives. It could be a defense mechanism against D-cysteine. The protein is D-cysteine desulfhydrase of Salmonella choleraesuis (strain SC-B67).